The chain runs to 362 residues: Innexin inx1 (362 aa).

Residues 1-28 (MYKLLGSLKSYLKWQDIQTDNAVFRLHN) lie on the Cytoplasmic side of the membrane. Residues 29–49 (SFTTVLLLTCSLIITATQYVG) form a helical membrane-spanning segment. Residues 50 to 110 (QPISCIVNGV…DAKKYYTYYQ (61 aa)) are Extracellular-facing. The helical transmembrane segment at 111–131 (WVCFVLFFQAMACYTPKFLWN) threads the bilayer. Topologically, residues 132 to 177 (KFEGGLMRMIVMGLNITICTREEKEAKRDALLDYLIKHVKRHKLYA) are cytoplasmic. A helical membrane pass occupies residues 178–198 (IRYWACEFLCCINIIVQMYLM). Residues 199-267 (NRFFDGEFLS…LPLNIVNEKT (69 aa)) lie on the Extracellular side of the membrane. The chain crosses the membrane as a helical span at residues 268–288 (YVFIWFWFWILLVLLIGLIVF). Over 289–362 (RGCIIFMPKF…VEPSKHDRAK (74 aa)) the chain is Cytoplasmic.

Belongs to the pannexin family. Heterooligomer of Inx2 and ogre. In terms of tissue distribution, in ovary, expressed in follicle cells. Expressed around the periphery of the embryo during cellular blastoderm formation. Repeating epidermal pattern emerges from stage 11, high levels of expression detected along the borders of each segment from stage 13. At stage 13, expressed in the dorsal branch of the tracheal system. During stage 15, detected in a few cells at each of the branch points of the dorsal trunk and at low levels in cardioblasts. In embryos, also expressed in the salivary gland and the hindgut (at protein level). At stage 17, expressed in the dorsal side of the CNS. Expressed in the imaginal wing disk. Expressed in larval CNS and in tissues outside of the CNS. In pupae, expressed in the CNS and in primary, secondary and tertiary pigment cells of the retina.

The protein localises to the cell membrane. It localises to the cell junction. The protein resides in the gap junction. Its subcellular location is the basolateral cell membrane. Its function is as follows. Structural component of the gap junctions. Essential for generation and/or maintenance of postembryonic neuroblasts and normal development of optic lobe. In Drosophila melanogaster (Fruit fly), this protein is Innexin inx1 (ogre).